The chain runs to 1023 residues: Exportin-T (1023 aa).

The protein belongs to the exportin family.

Its subcellular location is the nucleus. The protein resides in the cytoplasm. TRNA nucleus export receptor which facilitates tRNA translocation across the nuclear pore complex. Involved in pre-tRNA splicing, probably by affecting the interaction of pre-tRNA with splicing endonuclease. In Botryotinia fuckeliana (strain B05.10) (Noble rot fungus), this protein is Exportin-T (los1).